The following is a 423-amino-acid chain: D-tagatose-1,6-bisphosphate aldolase subunit GatZ (423 aa).

It belongs to the GatZ/KbaZ family. GatZ subfamily. Forms a complex with GatY.

It participates in carbohydrate metabolism; D-tagatose 6-phosphate degradation; D-glyceraldehyde 3-phosphate and glycerone phosphate from D-tagatose 6-phosphate: step 2/2. Its function is as follows. Component of the tagatose-1,6-bisphosphate aldolase GatYZ that is required for full activity and stability of the Y subunit. Could have a chaperone-like function for the proper and stable folding of GatY. When expressed alone, GatZ does not show any aldolase activity. Is involved in the catabolism of galactitol. The sequence is that of D-tagatose-1,6-bisphosphate aldolase subunit GatZ from Salmonella gallinarum (strain 287/91 / NCTC 13346).